Reading from the N-terminus, the 207-residue chain is MPKLSLLKQDGTNAGEITLNDTVFGIEPNEKVVVDVILSQRASLRQGTHKVKNRSEVRGGGRKPWRQKGTGRARQGSIRSPQWRGGGVVFGPTPRSYAYKLPKKVRRLAIKSILSSKVNEEKLVVLEGLTFDAPKTKEFAAFLKNISVDTKALIVVAGESENVELSARNLQGITVIPAESISVLEVAKHDKLIITKAAVEKVEEVLA.

The tract at residues 47-78 (GTHKVKNRSEVRGGGRKPWRQKGTGRARQGSI) is disordered. The span at 60–71 (GGRKPWRQKGTG) shows a compositional bias: basic residues.

This sequence belongs to the universal ribosomal protein uL4 family. Part of the 50S ribosomal subunit.

Its function is as follows. One of the primary rRNA binding proteins, this protein initially binds near the 5'-end of the 23S rRNA. It is important during the early stages of 50S assembly. It makes multiple contacts with different domains of the 23S rRNA in the assembled 50S subunit and ribosome. In terms of biological role, forms part of the polypeptide exit tunnel. This Listeria innocua serovar 6a (strain ATCC BAA-680 / CLIP 11262) protein is Large ribosomal subunit protein uL4.